A 188-amino-acid polypeptide reads, in one-letter code: F-box only protein 36 (188 aa).

The F-box domain occupies 91–137 (FDYLERLSDRLLLKIICYLDLEDIASLSQTSSKFEKLCKSDLLWEQI).

Directly interacts with SKP1 and CUL1.

Its function is as follows. Substrate-recognition component of the SCF (SKP1-CUL1-F-box protein)-type E3 ubiquitin ligase complex. In Mus musculus (Mouse), this protein is F-box only protein 36 (Fbxo36).